We begin with the raw amino-acid sequence, 506 residues long: FAD-linked oxidoreductase aurO (506 aa).

One can recognise an FAD-binding PCMH-type domain in the interval I92–M260.

Belongs to the oxygen-dependent FAD-linked oxidoreductase family. Might be part of an extracellular enzyme complex composed of GIP1, aurF, aurO and aurS. FAD serves as cofactor.

The protein localises to the secreted. Its subcellular location is the extracellular space. The protein operates within pigment biosynthesis. FAD-linked oxidoreductase; part of the gene cluster that mediates the biosynthesis of aurofusarin, a red mycelium pigment which is acting as a mycotoxin. The first step is performed by the polyketide synthase which condenses one acetyl-CoA and 6 malonyl-CoA units to form the first intermediate, the cyclic heptaketide and yellow pigment YWA1. The C2 hydroxyl group in the pyrone ring of YWA1 is probably formed during ring closure by an aldol-type cyclization reaction. The dehydratase aurZ then acts as the first tailoring enzyme in the aurofusarin biosynthetic pathway by converting YWA1 to nor-rubrofusarin. Nor-rubrofusarin is then methylated to rubrofusarin by the O-methyltransferase aurJ. Rubrofusarin is then transported across the plasma membrane by the rubrofusarin-specific pump aurT for further enzymatic processing by the extracellular complex composed of GIP1, aurF, aurO and aurS to yield aurofusarin. In Gibberella zeae (strain ATCC MYA-4620 / CBS 123657 / FGSC 9075 / NRRL 31084 / PH-1) (Wheat head blight fungus), this protein is FAD-linked oxidoreductase aurO.